Consider the following 255-residue polypeptide: MSATDASTADSGAKRKSSEDITHNCNANFGAENGLRKRVKSEEPVASIKDETNPEVPMKIKAEPVENADEPTSTTPAIKIKAEPADNGNSPAAAMVKTEPTNSNAQDAADESTVSSSSIRTSCRFGIRCYRRNPAHRSAEAHPGDQDYRRPNFPAPPLGTPACPFGNACYRRNPVHFQDYSHPADFNSAQNIRNRLRQRRAQRQNDDDSGTDEEDEPFGGDNDRDADYRPGADINEDEDDELEFDSQPISGDDYD.

Residues 1–11 (MSATDASTADS) show a composition bias toward low complexity. 3 disordered regions span residues 1–117 (MSAT…VSSS), 131–168 (RRNP…FGNA), and 195–255 (RLRQ…DDYD). Composition is skewed to basic and acidic residues over residues 12-22 (GAKRKSSEDIT), 40-64 (KSEE…KAEP), and 137-150 (RSAE…DYRR). 2 consecutive PBZ-type zinc fingers follow at residues 121–142 (TSCR…AEAH) and 161–182 (PACP…DYSH). Positions 207–218 (DDSGTDEEDEPF) are enriched in acidic residues. Basic and acidic residues predominate over residues 221–230 (DNDRDADYRP). A compositionally biased stretch (acidic residues) spans 234–244 (INEDEDDELEF).

The protein belongs to the APLF family.

Displays apurinic-apyrimidinic (AP) endonuclease and 3'-5' exonuclease activities in vitro. This is Aprataxin and PNK-like factor from Drosophila melanogaster (Fruit fly).